Here is a 711-residue protein sequence, read N- to C-terminus: Polyribonucleotide nucleotidyltransferase (711 aa).

Mg(2+) contacts are provided by Asp487 and Asp493. The KH domain maps to 554–613; the sequence is PRIHTMKISAEKIKDVIGKGGAVIRALTEETGTTIEIEDDGTIKIAATEGAAAKEAIRRI. The region spanning 623-691 is the S1 motif domain; sequence GRIYTGKVAR…RQGRVRLSMK (69 aa). The disordered stretch occupies residues 691-711; the sequence is KEAVEKPAEEAAAEAPAAKEE.

This sequence belongs to the polyribonucleotide nucleotidyltransferase family. Component of the RNA degradosome, which is a multiprotein complex involved in RNA processing and mRNA degradation. Requires Mg(2+) as cofactor.

The protein localises to the cytoplasm. The enzyme catalyses RNA(n+1) + phosphate = RNA(n) + a ribonucleoside 5'-diphosphate. In terms of biological role, involved in mRNA degradation. Catalyzes the phosphorolysis of single-stranded polyribonucleotides processively in the 3'- to 5'-direction. The polypeptide is Polyribonucleotide nucleotidyltransferase (Vibrio parahaemolyticus serotype O3:K6 (strain RIMD 2210633)).